A 741-amino-acid chain; its full sequence is Ion-translocating oxidoreductase complex subunit C (741 aa).

4Fe-4S ferredoxin-type domains are found at residues 369 to 397 and 407 to 436; these read GEPQ…QQLY and KATT…VQYF. The [4Fe-4S] cluster site is built by cysteine 377, cysteine 380, cysteine 383, cysteine 387, cysteine 416, cysteine 419, cysteine 422, and cysteine 426. The interval 627 to 654 is disordered; that stretch reads IARAKARKLEQQQQANAEPEEQVDPRKA.

This sequence belongs to the 4Fe4S bacterial-type ferredoxin family. RnfC subfamily. The complex is composed of six subunits: RsxA, RsxB, RsxC, RsxD, RsxE and RsxG. It depends on [4Fe-4S] cluster as a cofactor.

It localises to the cell inner membrane. Its function is as follows. Part of a membrane-bound complex that couples electron transfer with translocation of ions across the membrane. Required to maintain the reduced state of SoxR. The polypeptide is Ion-translocating oxidoreductase complex subunit C (Escherichia coli O127:H6 (strain E2348/69 / EPEC)).